We begin with the raw amino-acid sequence, 403 residues long: Microtubule-associated protein tau (403 aa).

Residues 1–32 (MAEPRQEFDVMEDHAQGDYTLQDHEGDMEPGL) are compositionally biased toward basic and acidic residues. The disordered stretch occupies residues 1–219 (MAEPRQEFDV…GPMPDLKNVK (219 aa)). An N-acetylalanine modification is found at Ala-2. Tyr-19 is subject to Phosphotyrosine. Lys-33 is covalently cross-linked (Glycyl lysine isopeptide (Lys-Gly) (interchain with G-Cter in ubiquitin)). 2 positions are modified to phosphoserine: Ser-35 and Ser-50. A compositionally biased stretch (polar residues) spans 50–60 (SETSDAKSTPT). Phosphothreonine occurs at positions 58, 60, and 71. Basic and acidic residues predominate over residues 90–106 (KGKDGTGPDDKKAKGAD). Thr-115 carries the phosphothreonine modification. Omega-N-methylarginine is present on Arg-117. Lys-125 carries the post-translational modification N6,N6-dimethyllysine; alternate. The residue at position 125 (Lys-125) is an N6-acetyllysine; alternate. Phosphothreonine occurs at positions 131, 137, 138, and 143. Over residues 136 to 147 (KTTPTPKTSPGT) the composition is skewed to low complexity. Phosphoserine occurs at positions 153 and 157. Over residues 156 to 176 (RSGYSSPGSPGTPGSRSRTPS) the composition is skewed to low complexity. Tyr-159 carries the phosphotyrosine modification. Ser-160, Ser-161, and Ser-164 each carry phosphoserine. A phosphothreonine mark is found at Thr-167 and Thr-174. A Phosphoserine modification is found at Ser-176. Thr-179 carries the phosphothreonine modification. N6-acetyllysine is present on Lys-187. Residue Thr-193 is modified to Phosphothreonine. Residues Ser-197 and Ser-199 each carry the phosphoserine modification. Tau/MAP repeat units follow at residues 206 to 236 (QAAPGPMPDLKNVKSKIGSTENLKHQPGGGK), 237 to 267 (VQIINKKLDLSNVQSKCGSKDNIKHVPGGGS), 268 to 298 (VQIVYKPVDLSKVTSKCGSLGNIHHKPGGGQ), and 299 to 330 (VEVKSEKLDFKDRVQSKIGSLDNITHVPGGGN). Lys-216 participates in a covalent cross-link: Glycyl lysine isopeptide (Lys-Gly) (interchain with G-Cter in ubiquitin). Lys-221 is modified (N6-acetyllysine; alternate). Residue Lys-221 is modified to N6-methyllysine; alternate. Residue Lys-221 forms a Glycyl lysine isopeptide (Lys-Gly) (interchain with G-Cter in ubiquitin); alternate linkage. At Ser-224 the chain carries Phosphoserine. Lys-229 is covalently cross-linked (Glycyl lysine isopeptide (Lys-Gly) (interchain with G-Cter in ubiquitin)). Position 243 is an N6-acetyllysine; alternate (Lys-243). A Glycyl lysine isopeptide (Lys-Gly) (interchain with G-Cter in ubiquitin); alternate cross-link involves residue Lys-243. Phosphoserine is present on residues Ser-247 and Ser-251. Lys-252 is subject to N6-acetyllysine. Residues Cys-253 and Cys-284 are joined by a disulfide bond. Residue Ser-255 is modified to Phosphoserine. Lys-260 carries the post-translational modification N6-acetyllysine; alternate. A Glycyl lysine isopeptide (Lys-Gly) (interchain with G-Cter in ubiquitin); alternate cross-link involves residue Lys-260. Ser-267 bears the Phosphoserine mark. Lys-273 carries the post-translational modification N6,N6-dimethyllysine; alternate. N6-acetyllysine; alternate occurs at positions 273, 279, and 283. Residues Lys-273, Lys-279, and Lys-283 each participate in a glycyl lysine isopeptide (Lys-Gly) (interchain with G-Cter in ubiquitin); alternate cross-link. A Phosphoserine modification is found at Ser-286. N6-acetyllysine; alternate is present on residues Lys-293, Lys-305, and Lys-309. Glycyl lysine isopeptide (Lys-Gly) (interchain with G-Cter in ubiquitin); alternate cross-links involve residues Lys-293, Lys-305, and Lys-309. Omega-N-methylarginine is present on Arg-311. Phosphoserine is present on Ser-314. A Glycyl lysine isopeptide (Lys-Gly) (interchain with G-Cter in ubiquitin) cross-link involves residue Lys-315. Ser-318 carries the phosphoserine modification. At Lys-331 the chain carries N6-acetyllysine; alternate. Residue Lys-331 forms a Glycyl lysine isopeptide (Lys-Gly) (interchain with G-Cter in ubiquitin); alternate linkage. Lys-337 participates in a covalent cross-link: Glycyl lysine isopeptide (Lys-Gly) (interchain with G-Cter in ubiquitin). Lys-347 bears the N6-acetyllysine; alternate mark. A Glycyl lysine isopeptide (Lys-Gly) (interchain with G-Cter in ubiquitin); alternate cross-link involves residue Lys-347. Phosphotyrosine is present on Tyr-356. Phosphoserine is present on residues Ser-358 and Ser-362. Residues 360-379 (VVSGDTSPRHLSNVSSTGSI) form a disordered region. Over residues 363–378 (GDTSPRHLSNVSSTGS) the composition is skewed to polar residues. Thr-365 is modified (phosphothreonine). Phosphoserine is present on residues Ser-366, Ser-371, Ser-378, and Ser-384. The residue at position 389 (Thr-389) is a Phosphothreonine.

In terms of assembly, interacts with MARK1, MARK2, MARK3 and MARK4. Interacts with SQSTM1 when polyubiquitinated. Interacts with PSMC2 through SQSTM1. Interacts with FKBP4. Binds to CSNK1D. Interacts with SGK1. Interacts with PIN1. Interacts with LRRK2. Interacts with LRP1, leading to endocytosis; this interaction is reduced in the presence of LRPAP1/RAP. Post-translationally, polyubiquitinated. Requires functional TRAF6 and may provoke SQSTM1-dependent degradation by the proteasome. Phosphorylation at various serine and threonine residues in S-P or T-P motifs by proline-directed protein kinases (PDPK1, CDK1, CDK5, GSK3, MAPK) (a few sites per protein in interphase, more in mitosis), and at serine residues in K-X-G-S motifs by MAP/microtubule affinity-regulating kinase (MARK1, MARK2, MARK3, MARK4), causing detachment from microtubules, and their disassembly. Phosphorylation at Ser-224 by BRSK1 and BRSK2 in neurons affects ability to bind microtubules and plays a role in neuron polarization. Phosphorylated by PHK. Dephosphorylation at several serine and threonine residues by the serine/threonine phosphatase PPP5C. Expressed in neurons.

It is found in the cytoplasm. The protein localises to the cytosol. Its subcellular location is the cell membrane. The protein resides in the cytoskeleton. It localises to the cell projection. It is found in the axon. The protein localises to the dendrite. Its function is as follows. Promotes microtubule assembly and stability, and might be involved in the establishment and maintenance of neuronal polarity. The C-terminus binds axonal microtubules while the N-terminus binds neural plasma membrane components, suggesting that tau functions as a linker protein between both. Axonal polarity is predetermined by tau localization (in the neuronal cell) in the domain of the cell body defined by the centrosome. The short isoforms allow plasticity of the cytoskeleton whereas the longer isoforms may preferentially play a role in its stabilization. The chain is Microtubule-associated protein tau (MAPT) from Capra hircus (Goat).